Reading from the N-terminus, the 2090-residue chain is Non-reducing polyketide synthase rdc1 (2090 aa).

An N-terminal acylcarrier protein transacylase (SAT) domain region spans residues 12–250; that stretch reads FLVGDQVDSW…NPLNIHALQH (239 aa). One can recognise a Ketosynthase family 3 (KS3) domain in the interval 375-808; that stretch reads TGRIAIVGMS…GGNACLLLED (434 aa). Active-site for beta-ketoacyl synthase activity residues include Cys-551, His-686, and His-726. The interval 912-1195 is malonyl-CoA:ACP transacylase (MAT) domain; it reads IFVFSGQGSH…NQVCTQFVRA (284 aa). The For acyl/malonyl transferase activity role is filled by Ser-1003. Positions 1293-1433 are N-terminal hotdog fold; the sequence is QHVAKESSSN…LVVQKNVKAL (141 aa). One can recognise a PKS/mFAS DH domain in the interval 1293–1607; it reads QHVAKESSSN…FVRISNALLQ (315 aa). The segment at 1304 to 1604 is product template (PT) domain; the sequence is GKLEITFRAS…NLSFVRISNA (301 aa). Residues 1459–1607 form a C-terminal hotdog fold region; that stretch reads QGHWLKHDIF…FVRISNALLQ (149 aa). A disordered region spans residues 1615 to 1650; the sequence is SKPVGRGMAKQEKQEVPATTEVVRQPEKEESRHSVD. Residues 1638-1649 show a composition bias toward basic and acidic residues; it reads RQPEKEESRHSV. Residues 1649–1726 form the Carrier domain; sequence VDTPSFSDVL…DIKRAFDILT (78 aa). Residue Ser-1686 is modified to O-(pantetheine 4'-phosphoryl)serine. The thioesterase (TE) domain stretch occupies residues 1820-1964; the sequence is ADGTGSIATY…THQHLKALFA (145 aa).

It participates in secondary metabolite biosynthesis. In terms of biological role, non-reducing polyketide synthase; part of the gene cluster that mediates the biosynthesis of radicicol, a resorcylic acid lactone (RAL) that irreversibly inhibits the HSP90 molecular chaperone, an important target for cancer chemotherapy. The radicicol cluster encodes only two apparent post-PKS enzymes, a cytochrome P450 monooxygenase (rdc4) and a non-heme halogenase (rdc2) that could introduce the epoxide and the chlorine, respectively. If this cluster includes all the genes required for radicicol biosynthesis, the remaining structural features of radicicol are presumably generated by the PKSs rdc1 and rdc5. The C-2' ketone could arise if the R-PKS rdc5 and NR-PKS rdc1 each carry out four iterations, in contrast to the five iteration-three iteration split for the hypothemycin PKSs. The origin of the cis 5',6' double bond is not known. The radicicol R-PKS rdc5 ER domain may catalyze either double bond isomerization or reduction in the third iteration. The polypeptide is Non-reducing polyketide synthase rdc1 (Metacordyceps chlamydosporia (Nematophagous fungus)).